A 122-amino-acid chain; its full sequence is Mth938 domain-containing protein (122 aa).

Residues 6-122 are MTH138-like domain; sequence IASLSWGQMK…RVGGVFHSTC (117 aa).

Belongs to the AAMDC family.

It is found in the cytoplasm. In terms of biological role, may play a role in preadipocyte differentiation and adipogenesis. This is Mth938 domain-containing protein (AAMDC) from Bos taurus (Bovine).